Consider the following 1100-residue polypeptide: Guanylate cyclase 2G (1100 aa).

Positions 1–43 are cleaved as a signal peptide; it reads MASRTRSESPLEPRLYAGAGSRADHPSLVLMLSVVMLVTCLEA. Topologically, residues 44–481 are extracellular; that stretch reads AKLTVGFHAP…VAGMTVTVTA (438 aa). N-linked (GlcNAc...) asparagine glycans are attached at residues Asn55, Asn85, Asn94, Asn217, Asn225, Asn238, Asn418, Asn440, and Asn443. A helical membrane pass occupies residues 482-502; the sequence is VIPTVTFLVLASAAAITGLML. At 503–1100 the chain is on the cytoplasmic side; it reads WRLRGKVQSH…EEEAKVSEIL (598 aa). Residues 546 to 837 form the Protein kinase domain; it reads SDTSTVKASA…EASPRGHVSI (292 aa). One can recognise a Guanylate cyclase domain in the interval 901–1031; that stretch reads TIFFSDIVGF…DTVNMASRME (131 aa).

This sequence belongs to the adenylyl cyclase class-4/guanylyl cyclase family. As to quaternary structure, homooligomer. In vitro interacts with NPR1/GC-A. Post-translationally, N-glycosylated. As to expression, highly expressed in testis.

Its subcellular location is the cell membrane. It carries out the reaction GTP = 3',5'-cyclic GMP + diphosphate. The polypeptide is Guanylate cyclase 2G (Gucy2g) (Mus musculus (Mouse)).